The sequence spans 118 residues: uncharacterized protein (118 aa).

Helical transmembrane passes span 5 to 25 (AFFN…SMVI) and 40 to 57 (FLTF…QHYI).

The protein localises to the membrane. This is an uncharacterized protein from African swine fever virus (strain Badajoz 1971 Vero-adapted) (Ba71V).